A 390-amino-acid chain; its full sequence is Aspartate beta-hydroxylase domain-containing protein 1 (390 aa).

The segment at 1–54 (MKEGRGSFSVERGPRKERETAQSGMWKGNSPAGSQGAAMEGTGGELGGQGNWGP) is disordered. Residues 1–72 (MKEGRGSFSV…RASLIMLPWP (72 aa)) are Cytoplasmic-facing. Gly residues predominate over residues 41–51 (GTGGELGGQGN). The chain crosses the membrane as a helical span at residues 73–95 (LPLASSALTLLFGALTSLFLWYC). Residues 96–390 (YRLGSQDMQA…ALDFVFAPDP (295 aa)) are Lumenal-facing. The interval 116-143 (RGGPVGCSEAGGPSPGGPGDPGEGPRTE) is disordered. Residues 128 to 137 (PSPGGPGDPG) are compositionally biased toward gly residues. Ser-129 bears the Phosphoserine mark.

The protein belongs to the aspartyl/asparaginyl beta-hydroxylase family.

Its subcellular location is the membrane. The protein is Aspartate beta-hydroxylase domain-containing protein 1 (ASPHD1) of Homo sapiens (Human).